The primary structure comprises 412 residues: L-cysteine:1D-myo-inositol 2-amino-2-deoxy-alpha-D-glucopyranoside ligase (412 aa).

Position 43 (C43) interacts with Zn(2+). L-cysteinyl-5'-AMP is bound by residues 43 to 46, T58, and 81 to 83; these read CGIT and NVT. The short motif at 45 to 55 is the 'HIGH' region element; it reads ITPYDATHLGH. Positions 186–191 match the 'ERGGDP' region motif; that stretch reads ERGGDP. W227 contributes to the L-cysteinyl-5'-AMP binding site. C231 contacts Zn(2+). 249 to 251 provides a ligand contact to L-cysteinyl-5'-AMP; it reads GND. H256 contacts Zn(2+). I283 provides a ligand contact to L-cysteinyl-5'-AMP. The 'KMSKS' region motif lies at 289–293; the sequence is KMSKS.

The protein belongs to the class-I aminoacyl-tRNA synthetase family. MshC subfamily. As to quaternary structure, monomer. It depends on Zn(2+) as a cofactor.

The enzyme catalyses 1D-myo-inositol 2-amino-2-deoxy-alpha-D-glucopyranoside + L-cysteine + ATP = 1D-myo-inositol 2-(L-cysteinylamino)-2-deoxy-alpha-D-glucopyranoside + AMP + diphosphate + H(+). Catalyzes the ATP-dependent condensation of GlcN-Ins and L-cysteine to form L-Cys-GlcN-Ins. The protein is L-cysteine:1D-myo-inositol 2-amino-2-deoxy-alpha-D-glucopyranoside ligase of Salinispora arenicola (strain CNS-205).